Reading from the N-terminus, the 234-residue chain is uncharacterized protein (234 aa).

LRR repeat units lie at residues 44-63 (LEFL…LPKL), 64-84 (KLRK…EKCP), 85-107 (NLTH…PLKQ), and 111-134 (LKSL…VFKL). The tract at residues 161 to 234 (EGLDDEEEGE…GEEERGQKRK (74 aa)) is disordered. Residues 163–226 (LDDEEEGEHE…GEEDEEELGE (64 aa)) show a composition bias toward acidic residues.

The protein belongs to the ANP32 family. As to expression, expressed in activated stem cells, such as mobilized CD34+ cells and cord blood CD34+ cells, but not in resting bone marrow CD34+ cells. Expressed in a variety of neoplastic cell lines, mainly in prostatic adenocarcinoma cell lines. Not expressed in normal prostatic tissue.

This is an uncharacterized protein from Homo sapiens (Human).